Here is a 526-residue protein sequence, read N- to C-terminus: Cytochrome P450 monooxygenase patI (526 aa).

Residues 1-6 are Cytoplasmic-facing; the sequence is MDILQL. The helical transmembrane segment at 7-29 threads the bilayer; it reads APTHLLAILLSSTSALFLITYLL. Residues 30-526 lie on the Lumenal side of the membrane; the sequence is RAGHRPSDLP…EAQEVFARFD (497 aa). Residue N81 is glycosylated (N-linked (GlcNAc...) asparagine). C446 serves as a coordination point for heme.

This sequence belongs to the cytochrome P450 family. Requires heme as cofactor.

It is found in the endoplasmic reticulum membrane. The catalysed reaction is 3-hydroxybenzyl alcohol + reduced [NADPH--hemoprotein reductase] + O2 = gentisyl alcohol + oxidized [NADPH--hemoprotein reductase] + H2O + H(+). Its pathway is mycotoxin biosynthesis; patulin biosynthesis. Cytochrome P450 monooxygenase; part of the gene cluster that mediates the biosynthesis of patulin, an acetate-derived tetraketide mycotoxin produced by several fungal species that shows antimicrobial properties against several bacteria. PatI catalyzes the conversion of m-hydroxybenzyl alcohol into gentisyl alcohol. The pathway begins with the synthesis of 6-methylsalicylic acid by the polyketide synthase (PKS) patK via condensation of acetate and malonate units. The 6-methylsalicylic acid decarboxylase patG then catalyzes the decarboxylation of 6-methylsalicylic acid to yield m-cresol (also known as 3-methylphenol). These first reactions occur in the cytosol. The intermediate m-cresol is then transported into the endoplasmic reticulum where the cytochrome P450 monooxygenase patH converts it to m-hydroxybenzyl alcohol, which is further converted to gentisyl alcohol by the cytochrome P450 monooxygenase patI. The oxidoreductases patJ and patO further convert gentisyl alcohol to isoepoxydon in the vacuole. PatN catalyzes then the transformation of isoepoxydon into phyllostine. The cluster protein patF is responsible for the conversion from phyllostine to neopatulin whereas the alcohol dehydrogenase patD converts neopatulin to E-ascladiol. The steps between isoepoxydon and E-ascladiol occur in the cytosol, and E-ascladiol is probably secreted to the extracellular space by one of the cluster-specific transporters patC or patM. Finally, the secreted patulin synthase patE catalyzes the conversion of E-ascladiol to patulin. The polypeptide is Cytochrome P450 monooxygenase patI (Penicillium expansum (Blue mold rot fungus)).